Reading from the N-terminus, the 392-residue chain is Norsolorinic acid reductase B (392 aa).

NADP(+) is bound at residue Asp75. Residue Tyr80 is the Proton donor of the active site. Residues 184-185 (SD), Gln210, 239-249 (GTLGQGSFQTE), and 311-319 (RKLEHIQGN) contribute to the NADP(+) site. A disordered region spans residues 242–263 (GQGSFQTEEGRKQREKDNPGRK). A compositionally biased stretch (basic and acidic residues) spans 249–261 (EEGRKQREKDNPG).

The protein belongs to the aldo/keto reductase family. Aldo/keto reductase 2 subfamily.

The protein operates within mycotoxin biosynthesis. In terms of biological role, norsolorinic acid reductase; part of the fragmented gene cluster that mediates the biosynthesis of dothistromin (DOTH), a polyketide toxin very similar in structure to the aflatoxin precursor, versicolorin B. The first step of the pathway is the conversion of acetate to norsolorinic acid (NOR) and requires the fatty acid synthase subunits hexA and hexB, as well as the polyketide synthase pksA. PksA combines a hexanoyl starter unit and 7 malonyl-CoA extender units to synthesize the precursor NOR. The hexanoyl starter unit is provided to the acyl-carrier protein (ACP) domain by the fungal fatty acid synthase hexA/hexB. The second step is the conversion of NOR to averantin (AVN) and requires the norsolorinic acid ketoreductase nor1, which catalyzes the dehydration of norsolorinic acid to form (1'S)-averantin. The cytochrome P450 monooxygenase avnA then catalyzes the hydroxylation of AVN to 5'hydroxyaverantin (HAVN). The next step is performed by adhA that transforms HAVN to averufin (AVF). Averufin might then be converted to hydroxyversicolorone by cypX and avfA. Hydroxyversicolorone is further converted versiconal hemiacetal acetate (VHA) by moxY. VHA is then the substrate for the versiconal hemiacetal acetate esterase est1 to yield versiconal (VAL). Versicolorin B synthase vbsA then converts VAL to versicolorin B (VERB) by closing the bisfuran ring. Then, the activity of the versicolorin B desaturase verB leads to versicolorin A (VERA). DotB, a predicted chloroperoxidase, may perform epoxidation of the A-ring of VERA. Alternatively, a cytochrome P450, such as cypX or avnA could catalyze this step. It is also possible that another, uncharacterized, cytochrome P450 enzyme is responsible for this step. Opening of the epoxide could potentially be achieved by the epoxide hydrolase epoA. However, epoA seems not to be required for DOTH biosynthesis, but other epoxide hydrolases may have the ability to complement this hydrolysis. Alternatively, opening of the epoxide ring could be achieved non-enzymatically. The next step is the deoxygenation of ring A to yield the 5,8-dihydroxyanthraquinone which is most likely catalyzed by the NADPH dehydrogenase encoded by ver1. The last stages of DOTH biosynthesis are proposed to involve hydroxylation of the bisfuran. OrdB and norB might have oxidative roles here. An alternative possibility is that cytochrome P450 monoogenases such as avnA and cypX might perform these steps in addition to previously proposed steps. The chain is Norsolorinic acid reductase B from Dothistroma septosporum (strain NZE10 / CBS 128990) (Red band needle blight fungus).